A 272-amino-acid chain; its full sequence is ATP synthase subunit delta (272 aa).

This sequence belongs to the ATPase delta chain family. As to quaternary structure, F-type ATPases have 2 components, F(1) - the catalytic core - and F(0) - the membrane proton channel. F(1) has five subunits: alpha(3), beta(3), gamma(1), delta(1), epsilon(1). F(0) has three main subunits: a(1), b(2) and c(10-14). The alpha and beta chains form an alternating ring which encloses part of the gamma chain. F(1) is attached to F(0) by a central stalk formed by the gamma and epsilon chains, while a peripheral stalk is formed by the delta and b chains.

It localises to the cell membrane. F(1)F(0) ATP synthase produces ATP from ADP in the presence of a proton or sodium gradient. F-type ATPases consist of two structural domains, F(1) containing the extramembraneous catalytic core and F(0) containing the membrane proton channel, linked together by a central stalk and a peripheral stalk. During catalysis, ATP synthesis in the catalytic domain of F(1) is coupled via a rotary mechanism of the central stalk subunits to proton translocation. Functionally, this protein is part of the stalk that links CF(0) to CF(1). It either transmits conformational changes from CF(0) to CF(1) or is implicated in proton conduction. The protein is ATP synthase subunit delta of Corynebacterium urealyticum (strain ATCC 43042 / DSM 7109).